The following is a 368-amino-acid chain: Metacaspase-6 (368 aa).

Residues histidine 86 and cysteine 139 contribute to the active site. The residue at position 139 (cysteine 139) is an S-nitrosocysteine. Positions 153 to 174 (GESTKKKKDSGDSSTINKETEA) are disordered.

This sequence belongs to the peptidase C14B family. In terms of processing, proteolytically processed; by an autocatalytic mechanism. As to expression, expressed in roots and flower buds.

This is Metacaspase-6 (AMC6) from Arabidopsis thaliana (Mouse-ear cress).